A 525-amino-acid chain; its full sequence is GMP synthase [glutamine-hydrolyzing] (525 aa).

A Glutamine amidotransferase type-1 domain is found at 9 to 207; it reads RILILDFGSQ…VLEISGCEAL (199 aa). The active-site Nucleophile is the Cys-86. Residues His-181 and Glu-183 contribute to the active site. Residues 208–400 form the GMPS ATP-PPase domain; the sequence is WTPANIVEDA…LGLPYDMVYR (193 aa). 235 to 241 is a binding site for ATP; that stretch reads SGGVDSS.

As to quaternary structure, homodimer.

It carries out the reaction XMP + L-glutamine + ATP + H2O = GMP + L-glutamate + AMP + diphosphate + 2 H(+). It participates in purine metabolism; GMP biosynthesis; GMP from XMP (L-Gln route): step 1/1. Its function is as follows. Catalyzes the synthesis of GMP from XMP. This is GMP synthase [glutamine-hydrolyzing] from Ectopseudomonas mendocina (strain ymp) (Pseudomonas mendocina).